We begin with the raw amino-acid sequence, 197 residues long: Phosphoheptose isomerase (197 aa).

Residues 34-196 enclose the SIS domain; the sequence is MVHCLLGGNK…DRTLFPQDEQ (163 aa). 49-51 provides a ligand contact to substrate; it reads NGG. The Zn(2+) site is built by histidine 58 and glutamate 62. Residues glutamate 62, 91–92, 117–119, serine 122, and glutamine 172 contribute to the substrate site; these read ND and STS. Positions 172 and 180 each coordinate Zn(2+).

Belongs to the SIS family. GmhA subfamily. In terms of assembly, homotetramer. The cofactor is Zn(2+).

Its subcellular location is the cytoplasm. It carries out the reaction 2 D-sedoheptulose 7-phosphate = D-glycero-alpha-D-manno-heptose 7-phosphate + D-glycero-beta-D-manno-heptose 7-phosphate. It functions in the pathway carbohydrate biosynthesis; D-glycero-D-manno-heptose 7-phosphate biosynthesis; D-glycero-alpha-D-manno-heptose 7-phosphate and D-glycero-beta-D-manno-heptose 7-phosphate from sedoheptulose 7-phosphate: step 1/1. Functionally, catalyzes the isomerization of sedoheptulose 7-phosphate in D-glycero-D-manno-heptose 7-phosphate. The polypeptide is Phosphoheptose isomerase (Shewanella baltica (strain OS223)).